Here is a 436-residue protein sequence, read N- to C-terminus: Protein GOLM2 (436 aa).

Methionine 1 carries the post-translational modification N-acetylmethionine. Residues 1-14 (MVGFGANRRAGRLP) lie on the Cytoplasmic side of the membrane. Residues 15 to 35 (SLVLVVLLVVIVVLAFNYWSI) traverse the membrane as a helical; Signal-anchor for type II membrane protein segment. The stretch at 35–195 (ISSRHVLLQE…QFLQEQKQEA (161 aa)) forms a coiled coil. Residues 36-436 (SSRHVLLQEE…YGKQHFNDVL (401 aa)) lie on the Lumenal side of the membrane. Basic and acidic residues-rich tracts occupy residues 193–207 (QEAHKIQSNDGKELD) and 224–247 (VADKNEEPSSNHIPHGKEQIKRGG). The disordered stretch occupies residues 193 to 436 (QEAHKIQSND…YGKQHFNDVL (244 aa)). Phosphoserine occurs at positions 233 and 275. 2 stretches are compositionally biased toward polar residues: residues 275-295 (SVSQHESHQTISHIPTGQPLS) and 305-321 (NHNGNPGTSKQNPSSPL). A phosphoserine mark is found at serine 328 and serine 332. Residues 344 to 362 (ATKDRVSDFHKLKQSRFFD) are compositionally biased toward basic and acidic residues. A Phosphoserine modification is found at serine 366. Residues 399–418 (YNEEEDGDGGEEDVQDDEER) are compositionally biased toward acidic residues. Basic and acidic residues predominate over residues 426-436 (DYGKQHFNDVL).

This sequence belongs to the GOLM family.

The protein resides in the membrane. In Pongo abelii (Sumatran orangutan), this protein is Protein GOLM2 (GOLM2).